Reading from the N-terminus, the 295-residue chain is MQIVVASYGARIRAKKGLLIVEGREGRREYPLHQVDEVLLLTGGISISTRALRALLRAGAVVAVFDQRGEPLGIFMKPVGDATGAKRLCQYAAATDGRGLQLAKKWVWLKIRGQLENLKRWRRRLGKYGTYAESISKAINALASAATPREVMEAEAAAAEAYWAAYREITGFPGRDQEGRDPVNAGLNYGYGILKALCFKSILLAGLDPYVGFLHADKSGRPSLVLDFMEQWRPRVDAVVAQLAEELEAENGLLTHKSRLRLAAAVLEEFNATGRPLSAEIHREARSIAKALCTS.

The Mn(2+) site is built by E155, H215, and E230.

It belongs to the CRISPR-associated endonuclease Cas1 family. As to quaternary structure, homodimer, forms a heterotetramer with a Cas2 homodimer. It depends on Mg(2+) as a cofactor. Mn(2+) is required as a cofactor.

Functionally, CRISPR (clustered regularly interspaced short palindromic repeat), is an adaptive immune system that provides protection against mobile genetic elements (viruses, transposable elements and conjugative plasmids). CRISPR clusters contain spacers, sequences complementary to antecedent mobile elements, and target invading nucleic acids. CRISPR clusters are transcribed and processed into CRISPR RNA (crRNA). Acts as a dsDNA endonuclease. Involved in the integration of spacer DNA into the CRISPR cassette. In Pyrobaculum aerophilum (strain ATCC 51768 / DSM 7523 / JCM 9630 / CIP 104966 / NBRC 100827 / IM2), this protein is CRISPR-associated endonuclease Cas1 2.